Here is a 405-residue protein sequence, read N- to C-terminus: MKILIINSGSSSIKFQLIDMSDESVLASGLVERIGETDTTEKNINCTFHPGTDKKHKIEICQTVADHRQGMLAAIELLGDKEQAVMSDLSEIDAVGHRIVHGGETMYQPVVVDEKVIAEITAAIPLAPLHNPGHLDGIKVAQELFTEVPHVTVFDTAFFQTIPPHAHIYALPYELYTKHRIRRYGAHGTSHKFVTNECAKLLEKPVEECNLITVHLGNGSSMSAVEGGKAIDTSMGVTPLEGLVMGTRSGDIDPAIMAFLNRNLGMSIEEIDHMLNKESGLKGICGMNDMRDIHAAADAGNELAELAVGIQTYRIRKYIGSYMAALGQVDAIVFTAGIGENDDIVRAKSLEKLENLGVILDKKLNAQRSKEPFCISTPESKIQVWVIPTNEELAIARETKAVVNA.

Asn-7 provides a ligand contact to Mg(2+). Lys-14 is an ATP binding site. Arg-98 is a substrate binding site. Asp-155 (proton donor/acceptor) is an active-site residue. Residues 215–219 (HLGNG), 289–291 (DMR), and 337–341 (GIGEN) contribute to the ATP site. Glu-391 contacts Mg(2+).

It belongs to the acetokinase family. Homodimer. The cofactor is Mg(2+). It depends on Mn(2+) as a cofactor.

It is found in the cytoplasm. It carries out the reaction acetate + ATP = acetyl phosphate + ADP. It functions in the pathway metabolic intermediate biosynthesis; acetyl-CoA biosynthesis; acetyl-CoA from acetate: step 1/2. Its function is as follows. Catalyzes the formation of acetyl phosphate from acetate and ATP. Can also catalyze the reverse reaction. The polypeptide is Acetate kinase (Desulfotalea psychrophila (strain LSv54 / DSM 12343)).